Consider the following 346-residue polypeptide: Tetraacyldisaccharide 4'-kinase (346 aa).

Residue 54–61 (TVGGAGKT) coordinates ATP.

This sequence belongs to the LpxK family.

It catalyses the reaction a lipid A disaccharide + ATP = a lipid IVA + ADP + H(+). It participates in glycolipid biosynthesis; lipid IV(A) biosynthesis; lipid IV(A) from (3R)-3-hydroxytetradecanoyl-[acyl-carrier-protein] and UDP-N-acetyl-alpha-D-glucosamine: step 6/6. Transfers the gamma-phosphate of ATP to the 4'-position of a tetraacyldisaccharide 1-phosphate intermediate (termed DS-1-P) to form tetraacyldisaccharide 1,4'-bis-phosphate (lipid IVA). The protein is Tetraacyldisaccharide 4'-kinase of Rhizobium meliloti (strain 1021) (Ensifer meliloti).